The chain runs to 495 residues: EF-hand calcium-binding domain-containing protein 14 (495 aa).

Disordered regions lie at residues 1–50 (MKKR…EEEE) and 381–404 (TNKP…FTSK). S17 is subject to Phosphoserine. A compositionally biased stretch (basic residues) spans 18–31 (RRKKPKKGPSSHRL). A compositionally biased stretch (acidic residues) spans 37-50 (PDSDSESSSEEEEE). EF-hand domains lie at 434–463 (SSTE…WTSL) and 464–495 (GSAM…ALGI). Residues D477, D479, D481, R483, and E488 each coordinate Ca(2+).

The polypeptide is EF-hand calcium-binding domain-containing protein 14 (EFCAB14) (Homo sapiens (Human)).